Consider the following 125-residue polypeptide: Small ribosomal subunit protein uS12 (125 aa).

The tract at residues 9 to 31 is disordered; sequence RQGREVEKIKSKSPAMENSPQRR. D89 carries the 3-methylthioaspartic acid modification. The disordered stretch occupies residues 105-125; sequence QGVKDRKQSRSKYGAKRPKAK. The span at 113 to 125 shows a compositional bias: basic residues; sequence SRSKYGAKRPKAK.

This sequence belongs to the universal ribosomal protein uS12 family. Part of the 30S ribosomal subunit. Contacts proteins S8 and S17. May interact with IF1 in the 30S initiation complex.

With S4 and S5 plays an important role in translational accuracy. Functionally, interacts with and stabilizes bases of the 16S rRNA that are involved in tRNA selection in the A site and with the mRNA backbone. Located at the interface of the 30S and 50S subunits, it traverses the body of the 30S subunit contacting proteins on the other side and probably holding the rRNA structure together. The combined cluster of proteins S8, S12 and S17 appears to hold together the shoulder and platform of the 30S subunit. This chain is Small ribosomal subunit protein uS12, found in Polaromonas naphthalenivorans (strain CJ2).